The following is a 666-amino-acid chain: DNA mismatch repair protein MutL (666 aa).

It belongs to the DNA mismatch repair MutL/HexB family.

Functionally, this protein is involved in the repair of mismatches in DNA. It is required for dam-dependent methyl-directed DNA mismatch repair. May act as a 'molecular matchmaker', a protein that promotes the formation of a stable complex between two or more DNA-binding proteins in an ATP-dependent manner without itself being part of a final effector complex. The polypeptide is DNA mismatch repair protein MutL (Clostridium botulinum (strain Loch Maree / Type A3)).